Consider the following 211-residue polypeptide: LexA repressor (211 aa).

Residues V28–E48 constitute a DNA-binding region (H-T-H motif). Active-site for autocatalytic cleavage activity residues include S132 and K170.

The protein belongs to the peptidase S24 family. Homodimer.

The enzyme catalyses Hydrolysis of Ala-|-Gly bond in repressor LexA.. Functionally, represses a number of genes involved in the response to DNA damage (SOS response), including recA and lexA. In the presence of single-stranded DNA, RecA interacts with LexA causing an autocatalytic cleavage which disrupts the DNA-binding part of LexA, leading to derepression of the SOS regulon and eventually DNA repair. This is LexA repressor from Leuconostoc citreum (strain KM20).